The primary structure comprises 421 residues: Acetylglutamate kinase (421 aa).

Residues 1–252 (MASTKEISQY…PLESSVSITR (252 aa)) form an acetylglutamate kinase region. Substrate contacts are provided by residues 59 to 60 (AG), Arg-81, and Asn-170. Residues 274 to 420 (ERVIRATTWK…HCAQHPPTLI (147 aa)) enclose the N-acetyltransferase domain.

This sequence in the N-terminal section; belongs to the acetylglutamate kinase family. ArgB subfamily.

It is found in the cytoplasm. It catalyses the reaction N-acetyl-L-glutamate + ATP = N-acetyl-L-glutamyl 5-phosphate + ADP. It participates in amino-acid biosynthesis; L-arginine biosynthesis; N(2)-acetyl-L-ornithine from L-glutamate: step 2/4. The protein is Acetylglutamate kinase (argB) of Xylella fastidiosa (strain 9a5c).